Consider the following 197-residue polypeptide: Outer-membrane lipoprotein LolB (197 aa).

A signal peptide spans 1-20 (MNRSRRLALFCLGAPLLLQA). Cys21 carries the N-palmitoyl cysteine lipid modification. Cys21 carries the S-diacylglycerol cysteine lipid modification.

The protein belongs to the LolB family. As to quaternary structure, monomer.

The protein localises to the cell outer membrane. Its function is as follows. Plays a critical role in the incorporation of lipoproteins in the outer membrane after they are released by the LolA protein. The polypeptide is Outer-membrane lipoprotein LolB (Cupriavidus necator (strain ATCC 17699 / DSM 428 / KCTC 22496 / NCIMB 10442 / H16 / Stanier 337) (Ralstonia eutropha)).